The sequence spans 1624 residues: ATP-binding cassette sub-family A member 9 (1624 aa).

A helical transmembrane segment spans residues 31–51; it reads LLEWLFSFLLVLFLYLFFSNL. N-linked (GlcNAc...) asparagine glycosylation is found at Asn120 and Asn195. 6 consecutive transmembrane segments (helical) span residues 221-243, 269-289, 300-320, 329-349, 354-374, and 398-418; these read VATD…YVSV, SWGL…ALIV, FVMV…LAFL, FLTG…GFPA, LPAF…TVGM, and LIIA…VLTL. An ABC transporter 1 domain is found at 481 to 716; that stretch reads IRIKNLKKEY…WGIGYHLSLH (236 aa). 517 to 524 contacts ATP; the sequence is GHSGAGKT. A helical transmembrane segment spans residues 864 to 884; it reads LWTILLLFGISFIPQLLEHLF. N-linked (GlcNAc...) asparagine glycosylation is present at Asn949. The next 6 membrane-spanning stretches (helical) occupy residues 1026-1046, 1065-1085, 1108-1128, 1136-1156, 1163-1183, and 1200-1220; these read TFFW…SSIG, AYWF…LLLM, ILCS…ISFI, SGIW…ATDL, GLFF…LFIF, and EIVY…LFIL. Residues 1288 to 1521 form the ABC transporter 2 domain; sequence LRKEYAGKKK…FGKDYLLEMK (234 aa). ATP is bound at residue 1326–1333; it reads GHNGAGKS.

The protein belongs to the ABC transporter superfamily. ABCA family. In terms of tissue distribution, widely expressed with higher expression in heart.

It is found in the membrane. Transporter that may play a role in monocyte differentiation and lipid transport and homeostasis. The polypeptide is ATP-binding cassette sub-family A member 9 (ABCA9) (Homo sapiens (Human)).